Reading from the N-terminus, the 601-residue chain is Glutamine--fructose-6-phosphate aminotransferase [isomerizing] (601 aa).

Cys2 acts as the Nucleophile; for GATase activity in catalysis. The 215-residue stretch at 2–216 folds into the Glutamine amidotransferase type-2 domain; it reads CGIVGYIGTN…DKEIVIVTKD (215 aa). 2 SIS domains span residues 282–421 and 453–591; these read ILDE…EIGD and IAGE…VDKP. The active-site For Fru-6P isomerization activity is the Lys596.

As to quaternary structure, homodimer.

The protein resides in the cytoplasm. The catalysed reaction is D-fructose 6-phosphate + L-glutamine = D-glucosamine 6-phosphate + L-glutamate. In terms of biological role, catalyzes the first step in hexosamine metabolism, converting fructose-6P into glucosamine-6P using glutamine as a nitrogen source. The sequence is that of Glutamine--fructose-6-phosphate aminotransferase [isomerizing] from Listeria innocua serovar 6a (strain ATCC BAA-680 / CLIP 11262).